The sequence spans 440 residues: C-terminal-binding protein 1 (440 aa).

NAD(+) contacts are provided by residues Ser-100, 180 to 185 (IGLGRV), Asp-204, 237 to 243 (CGLNEHN), 264 to 266 (TAR), and Asp-290. Residue Arg-266 is part of the active site. Glu-295 is an active-site residue. His-315 serves as the catalytic Proton donor. 315–318 (HAAW) serves as a coordination point for NAD(+). The interval 409–440 (HAHPAVAHPPHAPSPGQTIKPEADRDHPSDQL) is disordered. The segment covering 429–440 (PEADRDHPSDQL) has biased composition (basic and acidic residues).

This sequence belongs to the D-isomer specific 2-hydroxyacid dehydrogenase family. NAD(+) serves as cofactor.

It localises to the nucleus. Its function is as follows. Corepressor targeting diverse transcription regulators. Has dehydrogenase activity. The protein is C-terminal-binding protein 1 (ctbp1) of Xenopus laevis (African clawed frog).